Here is a 231-residue protein sequence, read N- to C-terminus: Chlorophyll a-b binding protein 1B-20, chloroplastic (231 aa).

Residues 1–25 form a disordered region; it reads RIQAYRFRTRVPPSPAASGSPRSTR. The N-terminal 31 residues, 1-31, are a transit peptide targeting the chloroplast; that stretch reads RIQAYRFRTRVPPSPAASGSPRSTRRDVAVQ. Chlorophyll b is bound at residue Trp-36. Phe-56 is a chlorophyll a binding site. Chlorophyll b contacts are provided by Arg-80, Ser-118, Glu-133, and Arg-136. Residues Lys-182, Glu-183, Asn-186, Arg-188, Gln-200, and His-215 each contribute to the chlorophyll a site. The chain crosses the membrane as a helical span at residues 183-199; it reads ELANGRLAMLAFLGFLV.

It belongs to the light-harvesting chlorophyll a/b-binding (LHC) protein family. As to quaternary structure, the LHC complex consists of chlorophyll a-b binding proteins. The cofactor is Binds at least 14 chlorophylls (8 Chl-a and 6 Chl-b) and carotenoids such as lutein and neoxanthin.. In terms of processing, photoregulated by reversible phosphorylation of its threonine residues.

The protein localises to the plastid. It localises to the chloroplast thylakoid membrane. The light-harvesting complex (LHC) functions as a light receptor, it captures and delivers excitation energy to photosystems with which it is closely associated. In Hordeum vulgare (Barley), this protein is Chlorophyll a-b binding protein 1B-20, chloroplastic (LHC Ib-20).